A 100-amino-acid chain; its full sequence is Urease subunit gamma (100 aa).

Belongs to the urease gamma subunit family. Heterotrimer of UreA (gamma), UreB (beta) and UreC (alpha) subunits. Three heterotrimers associate to form the active enzyme.

The protein localises to the cytoplasm. The catalysed reaction is urea + 2 H2O + H(+) = hydrogencarbonate + 2 NH4(+). It functions in the pathway nitrogen metabolism; urea degradation; CO(2) and NH(3) from urea (urease route): step 1/1. In Mycolicibacterium gilvum (strain PYR-GCK) (Mycobacterium gilvum (strain PYR-GCK)), this protein is Urease subunit gamma.